We begin with the raw amino-acid sequence, 559 residues long: BTB/POZ domain-containing protein At5g47800 (559 aa).

A BTB domain is found at 28-96 (NDLVIRINNT…CYDITINLSA (69 aa)). One can recognise an NPH3 domain in the interval 199-476 (DWWTEDISDL…VQALFFDQES (278 aa)). Tyr-417 is subject to Phosphotyrosine. A compositionally biased stretch (low complexity) spans 477-489 (GSKGASSRSESQE). 2 disordered regions span residues 477–502 (GSKGASSRSESQELFTRGKETPTDEH) and 524–559 (EGCKRGEEKTRSSTDPKKIVWKGTGSEHKHHISRDR). 2 stretches are compositionally biased toward basic and acidic residues: residues 492 to 502 (TRGKETPTDEH) and 524 to 541 (EGCKRGEEKTRSSTDPKK).

It belongs to the NPH3 family.

It participates in protein modification; protein ubiquitination. Its function is as follows. May act as a substrate-specific adapter of an E3 ubiquitin-protein ligase complex (CUL3-RBX1-BTB) which mediates the ubiquitination and subsequent proteasomal degradation of target proteins. The chain is BTB/POZ domain-containing protein At5g47800 from Arabidopsis thaliana (Mouse-ear cress).